The sequence spans 54 residues: Large ribosomal subunit protein bL33 (54 aa).

The protein belongs to the bacterial ribosomal protein bL33 family.

This is Large ribosomal subunit protein bL33 from Corynebacterium jeikeium (strain K411).